A 1178-amino-acid polypeptide reads, in one-letter code: DNA-directed RNA polymerase subunit beta' (1178 aa).

Zn(2+)-binding residues include Cys60, Cys62, Cys75, and Cys78. Mg(2+) is bound by residues Asp450, Asp452, and Asp454. Zn(2+) contacts are provided by Cys795, Cys869, Cys876, and Cys879.

It belongs to the RNA polymerase beta' chain family. As to quaternary structure, the RNAP catalytic core consists of 2 alpha, 1 beta, 1 beta' and 1 omega subunit. When a sigma factor is associated with the core the holoenzyme is formed, which can initiate transcription. Mg(2+) is required as a cofactor. The cofactor is Zn(2+).

It carries out the reaction RNA(n) + a ribonucleoside 5'-triphosphate = RNA(n+1) + diphosphate. DNA-dependent RNA polymerase catalyzes the transcription of DNA into RNA using the four ribonucleoside triphosphates as substrates. This Clostridium botulinum (strain Okra / Type B1) protein is DNA-directed RNA polymerase subunit beta'.